The sequence spans 449 residues: Protein tweety homolog 1-A (449 aa).

Residues 1 to 43 lie on the Extracellular side of the membrane; the sequence is MSTSHGYRASWWTNILHQVPHTNFQFEVVDNQFAPQEWPYQQA. A helical transmembrane segment spans residues 44–64; it reads LLFLASIAGLCLAISLILICV. The Cytoplasmic segment spans residues 65–86; that stretch reads YLIRFCCCASQEDDDSKNHRVC. The helical transmembrane segment at 87 to 107 threads the bilayer; sequence CVTWSCVAAVIICCAGIGIGF. The Extracellular segment spans residues 108–212; the sequence is YGNSETNDGV…QVNFIEDYRW (105 aa). N128 carries an N-linked (GlcNAc...) asparagine glycan. Residues 213–233 form a helical membrane-spanning segment; sequence LAYILLLLLDLIICLFTLLGL. Over 234–238 the chain is Cytoplasmic; the sequence is AKRIK. The chain crosses the membrane as a helical span at residues 239 to 259; sequence WLVIVMTVVSFFVLLLSWGSM. Residues 260 to 388 lie on the Extracellular side of the membrane; the sequence is GLEMATAVGL…LKGLCYDGME (129 aa). Disulfide bonds link C273/C383 and C301/C368. N-linked (GlcNAc...) asparagine glycosylation is found at N282 and N353. The chain crosses the membrane as a helical span at residues 389 to 409; the sequence is GILFLLLFSFLSALSFTAAVC. Topologically, residues 410-449 are cytoplasmic; that stretch reads SLPRAWKRFQNRDLDYDDMDEDDPFNPQESKRFVQWQSSI.

The protein belongs to the tweety family. As to quaternary structure, homotetramer; disulfide-linked. Homodimer.

It is found in the cell membrane. The catalysed reaction is chloride(in) = chloride(out). It catalyses the reaction L-glutamate(out) = L-glutamate(in). Functionally, may act as a calcium-independent, swelling-dependent volume-regulated anion channel (VRAC-swell) which plays a pivotal role in the process of regulatory volume decrease (RVD) in the brain through the efflux of anions like chloride and organic osmolytes like glutamate. In Xenopus laevis (African clawed frog), this protein is Protein tweety homolog 1-A (ttyh1-a).